The sequence spans 270 residues: Chromo domain-containing protein cec-4 (270 aa).

2 disordered regions span residues 1–24 and 143–229; these read MAKK…ETSK and KIAQ…KNDV. The Chromo domain occupies 87 to 147; that stretch reads YAVERVLAHR…HQEDLKIAQT (61 aa). Basic residues-rich tracts occupy residues 151-167 and 187-197; these read TPSK…KRRA and TPKQSTKKLKR. Positions 205–229 are enriched in basic and acidic residues; that stretch reads LVEKSKKKAIPDLENHTLDQEKNDV.

As to quaternary structure, interacts with mono-, di- and tri-methylated 'Lys-9' residues on histone H3. Weakly interacts with methylated 'Lys-37' residues on histone H3.

Its subcellular location is the nucleus inner membrane. The protein localises to the membrane. In terms of biological role, chromatin anchor protein which binds to methylated lysine residues on histone H3, thereby recruiting heterochromatin to the nuclear periphery, especially in embryonic cells, with a lesser role in differentiated cells. May be required for the correct positioning of chromatin and nucleoli in embryos. This Caenorhabditis elegans protein is Chromo domain-containing protein cec-4.